The following is a 349-amino-acid chain: UDP-N-acetylenolpyruvoylglucosamine reductase (349 aa).

In terms of domain architecture, FAD-binding PCMH-type spans 17-187 (VNESADLIIQ…TAITLRLNKQ (171 aa)). Residue Arg-163 is part of the active site. Catalysis depends on Ser-233, which acts as the Proton donor. The active site involves Glu-328.

It belongs to the MurB family. Requires FAD as cofactor.

The protein localises to the cytoplasm. It catalyses the reaction UDP-N-acetyl-alpha-D-muramate + NADP(+) = UDP-N-acetyl-3-O-(1-carboxyvinyl)-alpha-D-glucosamine + NADPH + H(+). It functions in the pathway cell wall biogenesis; peptidoglycan biosynthesis. Functionally, cell wall formation. In Aliivibrio fischeri (strain ATCC 700601 / ES114) (Vibrio fischeri), this protein is UDP-N-acetylenolpyruvoylglucosamine reductase.